Here is a 626-residue protein sequence, read N- to C-terminus: Phosphomethylpyrimidine synthase (626 aa).

Substrate contacts are provided by residues Asn237, Met266, Tyr295, His331, 351–353, 392–395, and Glu431; these read SRG and DGLR. His435 contributes to the Zn(2+) binding site. Tyr458 lines the substrate pocket. His499 lines the Zn(2+) pocket. Positions 579, 582, and 587 each coordinate [4Fe-4S] cluster.

It belongs to the ThiC family. In terms of assembly, homodimer. It depends on [4Fe-4S] cluster as a cofactor.

It catalyses the reaction 5-amino-1-(5-phospho-beta-D-ribosyl)imidazole + S-adenosyl-L-methionine = 4-amino-2-methyl-5-(phosphooxymethyl)pyrimidine + CO + 5'-deoxyadenosine + formate + L-methionine + 3 H(+). It functions in the pathway cofactor biosynthesis; thiamine diphosphate biosynthesis. Catalyzes the synthesis of the hydroxymethylpyrimidine phosphate (HMP-P) moiety of thiamine from aminoimidazole ribotide (AIR) in a radical S-adenosyl-L-methionine (SAM)-dependent reaction. The sequence is that of Phosphomethylpyrimidine synthase from Cupriavidus pinatubonensis (strain JMP 134 / LMG 1197) (Cupriavidus necator (strain JMP 134)).